Here is a 524-residue protein sequence, read N- to C-terminus: Cytochrome P450 52A6 (524 aa).

A helical transmembrane segment spans residues 17–34; it reads WYTVITLAALVFLISSNI. Cys-472 contacts heme.

The protein belongs to the cytochrome P450 family. Heme is required as a cofactor.

Its subcellular location is the membrane. Its function is as follows. Together with an NADPH cytochrome P450 the enzyme system catalyzes the terminal hydroxylation as the first step in the assimilation of alkanes and fatty acids. Preferentially hydroxylates hexadecane. The chain is Cytochrome P450 52A6 (CYP52A6) from Candida tropicalis (Yeast).